The chain runs to 145 residues: D-aminoacyl-tRNA deacylase (145 aa).

Positions 137–138 match the Gly-cisPro motif, important for rejection of L-amino acids motif; that stretch reads GP.

It belongs to the DTD family. Homodimer.

The protein resides in the cytoplasm. It catalyses the reaction glycyl-tRNA(Ala) + H2O = tRNA(Ala) + glycine + H(+). The enzyme catalyses a D-aminoacyl-tRNA + H2O = a tRNA + a D-alpha-amino acid + H(+). Its function is as follows. An aminoacyl-tRNA editing enzyme that deacylates mischarged D-aminoacyl-tRNAs. Also deacylates mischarged glycyl-tRNA(Ala), protecting cells against glycine mischarging by AlaRS. Acts via tRNA-based rather than protein-based catalysis; rejects L-amino acids rather than detecting D-amino acids in the active site. By recycling D-aminoacyl-tRNA to D-amino acids and free tRNA molecules, this enzyme counteracts the toxicity associated with the formation of D-aminoacyl-tRNA entities in vivo and helps enforce protein L-homochirality. The polypeptide is D-aminoacyl-tRNA deacylase (Salmonella agona (strain SL483)).